A 131-amino-acid polypeptide reads, in one-letter code: Antitoxin MqsA (131 aa).

Zn(2+)-binding residues include Cys3, Cys6, Cys37, and Cys40. The HTH cro/C1-type domain maps to 74–127 (IVKVRKKLSLTQKEASEIFGGGVNAFSRYEKGNAQPHPSTIKLLRVLDKHPELL). Positions 85-104 (QKEASEIFGGGVNAFSRYEK) form a DNA-binding region, H-T-H motif.

In terms of assembly, homodimer. Crystallizes as a heterotetramer with MqsA, MqsR-MqsA(2)-MqsR. Purifies as a probable heterohexamer of 2 MqsR dimers and 1 MqsA dimer. Binds promoter DNA as a dimer. When the 2 dissociate the MsqR mRNA interferase becomes active. It depends on Zn(2+) as a cofactor. Post-translationally, degraded in the presence of oxidative stress, maybe by the Lon and/or ClpX proteases.

Functionally, antitoxin component of a type II toxin-antitoxin (TA) system. Labile antitoxin that binds to the MqsR mRNA interferase toxin and neutralizes its endoribonuclease activity. Overexpression prevents MqsR-mediated cessation of cell growth and inhibition of cell proliferation. Initially reported to act as a cotranscription factor with MqsA. Following further experiments, the MqsR-MqsA complex does not bind DNA and all reported data are actually due to a small fraction of free MqsA alone binding DNA. Addition of MqsR to a preformed MqsA-promoter DNA complex causes dissociation of the MqsA-DNA complex, probably causing derepression of MqsA-repressed transcripts. MqsA binds to 2 palindromes in the promoter region of the mqsRA operon activating its transcription. Binds to other promoters, inducing mcbR and spy and repressing cspD among others. Binds to and represses the rpoS promoter, the master stress regulator, resulting in decreased cyclic-di-GMP, reduced stress resistance, increased cell motility and decreased biofilm formation; in these experiments 5 TA systems are missing (lacks MazEF, RelEB, ChpB, YoeB-YefM, YafQ-DinJ). An earlier study showed overexpression alone increases biofilm formation, perhaps by repressing cspD; in these experiments the 5 TA systems are present. Represses the csgD promoter. In the presence of stress, when this protein is degraded, the promoters it represses are derepressed, leading to biofilm formation. This TA system mediates cell growth during bile acid deoxycholate stress by degrading mRNA for probable deoxycholate-binding protein YgiS; bile acid detergents such as deoxycholate are important for host defense against bacterial growth in the gall bladder and duodenum. In Escherichia coli (strain K12), this protein is Antitoxin MqsA.